The following is a 362-amino-acid chain: NAD(P)H-quinone oxidoreductase subunit 1, chloroplastic (362 aa).

8 helical membrane-spanning segments follow: residues 27–47 (IWIL…LVIV), 94–114 (IPLF…SFLV), 128–148 (IGVF…LMAG), 164–184 (AAQS…ISLL), 202–222 (FFGW…ISSL), 247–267 (YSGI…LVSS), 303–323 (TMSI…SITI), and 335–355 (LLNL…LLTT).

The protein belongs to the complex I subunit 1 family. As to quaternary structure, NDH is composed of at least 16 different subunits, 5 of which are encoded in the nucleus.

Its subcellular location is the plastid. It is found in the chloroplast thylakoid membrane. The catalysed reaction is a plastoquinone + NADH + (n+1) H(+)(in) = a plastoquinol + NAD(+) + n H(+)(out). The enzyme catalyses a plastoquinone + NADPH + (n+1) H(+)(in) = a plastoquinol + NADP(+) + n H(+)(out). Its function is as follows. NDH shuttles electrons from NAD(P)H:plastoquinone, via FMN and iron-sulfur (Fe-S) centers, to quinones in the photosynthetic chain and possibly in a chloroplast respiratory chain. The immediate electron acceptor for the enzyme in this species is believed to be plastoquinone. Couples the redox reaction to proton translocation, and thus conserves the redox energy in a proton gradient. The sequence is that of NAD(P)H-quinone oxidoreductase subunit 1, chloroplastic (ndhA) from Oryza sativa (Rice).